The chain runs to 3511 residues: Unconventional myosin-XV (3511 aa).

4 disordered regions span residues 1-44 (MADE…TPKI), 574-690 (KKPI…SLRQ), 712-1030 (FAEP…PNKN), and 1105-1135 (VSSFRPKGPAPVQPPEHPDQDPEQGPAPQAC). Over residues 622–634 (SQPQARNNNNSHG) the composition is skewed to polar residues. Residues 654 to 672 (PPMPAPSPSPASPLTPPFS) show a composition bias toward pro residues. Low complexity predominate over residues 769 to 792 (PSLRSLPGQGYHSPLGPLSPQLSL). Positions 797–807 (FQPPFPPPPRR) are enriched in pro residues. The Myosin motor domain occupies 1206–1883 (DGVEDMTQLE…LHQLLESMRE (678 aa)). ATP is bound at residue 1299–1306 (GESGSGKT). Residues 1307–1334 (EATKLILRCLAAMNQRRDVMQQIKILEA) adopt a coiled-coil conformation. The tract at residues 1776-1783 (FVRCLKPN) is actin-binding. The tract at residues 1872–2013 (EHLHQLLESM…SSGPRVAVVR (142 aa)) is neck or regulatory domain. IQ domains are found at residues 1886–1908 (QNRAALTLQRYLRGFFIQRHFRS) and 1909–1938 (LRRKIILLQSRARGFLARQRYQQMRQSLLK). Positions 2014–3511 (APRLQAEPCV…TLPPSEITLL (1498 aa)) are tail. In terms of domain architecture, MyTH4 1 spans 2049–2195 (MLTVPLKMPL…PTQLEWTAIQ (147 aa)). 5 disordered regions span residues 2330-2359 (SHKEDGTNGETEAQRWTSNRQAVDSIGEST), 2392-2425 (YRMKGGGQPGGGGGSTSEDTSRRPPEPKLKPIPG), 2460-2509 (PLSA…SVAK), 2565-2584 (KQPPWAGHPEARRTDGGKVF), and 2629-2648 (RPCMGPTPVQPSRSLEPPED). Positions 2337–2351 (NGETEAQRWTSNRQA) are enriched in polar residues. Residues 2395 to 2406 (KGGGQPGGGGGS) show a composition bias toward gly residues. Positions 2410 to 2420 (DTSRRPPEPKL) are enriched in basic and acidic residues. Over residues 2573–2584 (PEARRTDGGKVF) the composition is skewed to basic and acidic residues. The SH3 domain maps to 2848 to 2934 (KDSDYVVAVR…PSELVQPAAA (87 aa)). The disordered stretch occupies residues 2964–2984 (EVGRRREGPPVRARSADSGED). Residues 2965-2980 (VGRRREGPPVRARSAD) show a composition bias toward basic and acidic residues. The MyTH4 2 domain maps to 3031–3185 (FTKVPIQESL…PSNMELRAML (155 aa)). In terms of domain architecture, FERM spans 3190 to 3511 (SKRQLFLLPG…TLPPSEITLL (322 aa)).

The protein belongs to the TRAFAC class myosin-kinesin ATPase superfamily. Myosin family. In terms of assembly, interacts with the third PDZ domain of WHRN which is necessary for localization of WHRN to stereocilium tips. Interacts with FASLG. Interacts with EPS8. In the developing inner ear, expressed in cochlea and vestibular apparatus. Expression appears to be restricted to cochlear neurosensory cells and upper epithelial layer of macula saccula. Also expressed in macula utriculi and cristae ampullaris of the semicircular canals. In adult cochlear hair cells, highest expression in stereocilia and apical body.

The protein localises to the cell projection. The protein resides in the stereocilium. It localises to the cytoplasm. Its subcellular location is the cytoskeleton. Functionally, myosins are actin-based motor molecules with ATPase activity. Unconventional myosins serve in intracellular movements. Their highly divergent tails are presumed to bind to membranous compartments, which would be moved relative to actin filaments. Required for the arrangement of stereocilia in mature hair bundles. The protein is Unconventional myosin-XV (Myo15a) of Mus musculus (Mouse).